The sequence spans 103 residues: uncharacterized protein (103 aa).

Positions 38–51 (TTTTSSTTSASTTS) are enriched in low complexity. The tract at residues 38 to 70 (TTTTSSTTSASTTSQPSFSLPTSCNSNSPQSNL) is disordered. Polar residues predominate over residues 52-70 (QPSFSLPTSCNSNSPQSNL).

This is an uncharacterized protein from Dictyostelium discoideum (Social amoeba).